Reading from the N-terminus, the 142-residue chain is Alpha-lactalbumin (142 aa).

The signal sequence occupies residues 1–18 (MMSFVSLLLVGILFHATQ). The C-type lysozyme domain occupies 20–142 (EQLTKCEVFR…KLDQWLCEKL (123 aa)). Disulfide bonds link C25-C139, C47-C130, C80-C96, and C92-C110. Residues N64 and N93 are each glycosylated (N-linked (GlcNAc...) asparagine). Residues K98, D101, D103, D106, and D107 each contribute to the Ca(2+) site.

This sequence belongs to the glycosyl hydrolase 22 family. In terms of assembly, lactose synthase (LS) is a heterodimer of a catalytic component, beta1,4-galactosyltransferase (beta4Gal-T1) and a regulatory component, alpha-lactalbumin (LA). As to expression, mammary gland specific. Secreted in milk.

It is found in the secreted. Regulatory subunit of lactose synthase, changes the substrate specificity of galactosyltransferase in the mammary gland making glucose a good acceptor substrate for this enzyme. This enables LS to synthesize lactose, the major carbohydrate component of milk. In other tissues, galactosyltransferase transfers galactose onto the N-acetylglucosamine of the oligosaccharide chains in glycoproteins. The chain is Alpha-lactalbumin (LALBA) from Bubalus bubalis (Domestic water buffalo).